Here is a 93-residue protein sequence, read N- to C-terminus: Small ribosomal subunit protein uS19 (93 aa).

It belongs to the universal ribosomal protein uS19 family.

Functionally, protein S19 forms a complex with S13 that binds strongly to the 16S ribosomal RNA. The chain is Small ribosomal subunit protein uS19 from Campylobacter hominis (strain ATCC BAA-381 / DSM 21671 / CCUG 45161 / LMG 19568 / NCTC 13146 / CH001A).